We begin with the raw amino-acid sequence, 110 residues long: Large ribosomal subunit protein uL22 (110 aa).

The protein belongs to the universal ribosomal protein uL22 family. In terms of assembly, part of the 50S ribosomal subunit.

Functionally, this protein binds specifically to 23S rRNA; its binding is stimulated by other ribosomal proteins, e.g. L4, L17, and L20. It is important during the early stages of 50S assembly. It makes multiple contacts with different domains of the 23S rRNA in the assembled 50S subunit and ribosome. The globular domain of the protein is located near the polypeptide exit tunnel on the outside of the subunit, while an extended beta-hairpin is found that lines the wall of the exit tunnel in the center of the 70S ribosome. The protein is Large ribosomal subunit protein uL22 of Nitrosomonas europaea (strain ATCC 19718 / CIP 103999 / KCTC 2705 / NBRC 14298).